The sequence spans 511 residues: Putative CBL-interacting protein kinase 13 (511 aa).

The 255-residue stretch at Phe-25–Phe-279 folds into the Protein kinase domain. Residues Leu-31 to Val-39 and Lys-54 each bind ATP. The Proton acceptor role is filled by Asp-147. The segment at Asp-165–Glu-194 is activation loop. The segment at Val-307–Ser-340 is disordered. An NAF domain is found at Asp-321–Asp-383. Positions Lys-400–Val-429 are PPI.

The protein belongs to the protein kinase superfamily. CAMK Ser/Thr protein kinase family. SNF1 subfamily. Requires Mn(2+) as cofactor.

The catalysed reaction is L-seryl-[protein] + ATP = O-phospho-L-seryl-[protein] + ADP + H(+). It carries out the reaction L-threonyl-[protein] + ATP = O-phospho-L-threonyl-[protein] + ADP + H(+). CIPK serine-threonine protein kinases interact with CBL proteins. Binding of a CBL protein to the regulatory NAF domain of CIPK protein lead to the activation of the kinase in a calcium-dependent manner. The sequence is that of Putative CBL-interacting protein kinase 13 (CIPK13) from Oryza sativa subsp. japonica (Rice).